The chain runs to 229 residues: Sugar fermentation stimulation protein homolog (229 aa).

This sequence belongs to the SfsA family.

This chain is Sugar fermentation stimulation protein homolog, found in Clostridium novyi (strain NT).